Consider the following 2497-residue polypeptide: Integrator complex subunit 1 homolog (2497 aa).

Positions 1-10 (MMLNKIKRSK) are enriched in basic residues. 6 disordered regions span residues 1-151 (MMLN…NNNI), 300-337 (QPQP…IKKS), 946-965 (QQQQ…QQPT), 1028-1108 (TTTT…TSSS), 1234-1292 (INNN…NQKS), and 1572-1604 (NNNN…NNIT). Low complexity-rich tracts occupy residues 37–46 (SDNNNNNSND), 60–151 (NNSI…NNNI), 305–333 (QQQQ…QPQQ), 946–963 (QQQQ…QQQQ), and 1028–1058 (TTTT…SSSL). Polar residues predominate over residues 1075–1091 (SGLSGSSNGINQSSDSI). Low complexity-rich tracts occupy residues 1097–1108 (STSPTTTTTSSS), 1234–1265 (INNN…NINK), 1272–1289 (HSNS…NKNN), and 1572–1602 (NNNN…NNNN). Residues 1645–1675 (RILKNTTQQKQQKQQQKESVQKSIQSLSKLI) are a coiled coil. Residues 2084-2115 (QQQQQQQQQQQQQQKQQSNNSNNINNNNNNNN) are compositionally biased toward low complexity. Disordered regions lie at residues 2084 to 2123 (QQQQ…QKSK) and 2329 to 2350 (NNNN…NNNN).

Belongs to the Integrator subunit 1 family. In terms of assembly, component of the Integrator complex. The core complex associates with protein phosphatase 2A subunits to form the Integrator-PP2A (INTAC) complex.

It localises to the nucleus. Component of the integrator complex, a multiprotein complex that terminates RNA polymerase II (Pol II) transcription in the promoter-proximal region of genes. The integrator complex provides a quality checkpoint during transcription elongation by driving premature transcription termination of transcripts that are unfavorably configured for transcriptional elongation: the complex terminates transcription by (1) catalyzing dephosphorylation of the C-terminal domain (CTD) of Pol II subunit polr2a, (2) degrading the exiting nascent RNA transcript via endonuclease activity and (3) promoting the release of Pol II from bound DNA. The integrator complex is also involved in terminating the synthesis of non-coding Pol II transcripts, such as enhancer RNAs (eRNAs), small nuclear RNAs (snRNAs), telomerase RNAs and long non-coding RNAs (lncRNAs). This chain is Integrator complex subunit 1 homolog (ints1), found in Dictyostelium discoideum (Social amoeba).